The chain runs to 327 residues: Lipoyl synthase (327 aa).

The [4Fe-4S] cluster site is built by Cys74, Cys79, Cys85, Cys100, Cys104, Cys107, and Ser314. The 218-residue stretch at 86–303 (FSGGTATFMI…AEEGEKMGFK (218 aa)) folds into the Radical SAM core domain.

This sequence belongs to the radical SAM superfamily. Lipoyl synthase family. It depends on [4Fe-4S] cluster as a cofactor.

The protein resides in the cytoplasm. The catalysed reaction is [[Fe-S] cluster scaffold protein carrying a second [4Fe-4S](2+) cluster] + N(6)-octanoyl-L-lysyl-[protein] + 2 oxidized [2Fe-2S]-[ferredoxin] + 2 S-adenosyl-L-methionine + 4 H(+) = [[Fe-S] cluster scaffold protein] + N(6)-[(R)-dihydrolipoyl]-L-lysyl-[protein] + 4 Fe(3+) + 2 hydrogen sulfide + 2 5'-deoxyadenosine + 2 L-methionine + 2 reduced [2Fe-2S]-[ferredoxin]. Its pathway is protein modification; protein lipoylation via endogenous pathway; protein N(6)-(lipoyl)lysine from octanoyl-[acyl-carrier-protein]: step 2/2. Catalyzes the radical-mediated insertion of two sulfur atoms into the C-6 and C-8 positions of the octanoyl moiety bound to the lipoyl domains of lipoate-dependent enzymes, thereby converting the octanoylated domains into lipoylated derivatives. The chain is Lipoyl synthase from Pseudomonas aeruginosa (strain LESB58).